A 504-amino-acid chain; its full sequence is Cystathionine beta-synthase (504 aa).

Heme contacts are provided by cysteine 12 and histidine 23. Lysine 78 is subject to N6-(pyridoxal phosphate)lysine. Pyridoxal 5'-phosphate is bound by residues asparagine 108, 215-219, and serine 307; that span reads GTGGT. 2 CBS domains span residues 375–434 and 442–498; these read LSFD…IVKC and MVKQ…NGTS.

This sequence belongs to the cysteine synthase/cystathionine beta-synthase family. As to quaternary structure, homodimer. Pyridoxal 5'-phosphate serves as cofactor.

The enzyme catalyses L-homocysteine + L-serine = L,L-cystathionine + H2O. It participates in amino-acid biosynthesis; L-cysteine biosynthesis; L-cysteine from L-homocysteine and L-serine: step 1/2. Its activity is regulated as follows. Has no response to S-adenosyl-methionine/AdoMet, unlike mammalian orthologs. Binds non-covalently to a heme group that may control the redox sensitivity of the enzyme. Functionally, hydro-lyase catalyzing the first step of the transsulfuration pathway, where the hydroxyl group of L-serine is displaced by L-homocysteine in a beta-replacement reaction to form L-cystathionine, the precursor of L-cysteine. The protein is Cystathionine beta-synthase of Apis mellifera (Honeybee).